Consider the following 406-residue polypeptide: Large ribosomal subunit protein uL4z (406 aa).

A disordered region spans residues 56-95 (PYAVSKKAGHQTSAESWGTGRAVSRIPRVPGGGTHRAGQA).

Belongs to the universal ribosomal protein uL4 family.

The sequence is that of Large ribosomal subunit protein uL4z (RPL4A) from Arabidopsis thaliana (Mouse-ear cress).